We begin with the raw amino-acid sequence, 274 residues long: NADPH-dependent 7-cyano-7-deazaguanine reductase (274 aa).

Position 80–82 (80–82 (VES)) interacts with substrate. Position 82–83 (82–83 (SK)) interacts with NADPH. The Thioimide intermediate role is filled by cysteine 181. Aspartate 188 acts as the Proton donor in catalysis. Residue 220-221 (HE) coordinates substrate. 249–250 (RG) lines the NADPH pocket.

It belongs to the GTP cyclohydrolase I family. QueF type 2 subfamily. As to quaternary structure, homodimer.

It localises to the cytoplasm. It carries out the reaction 7-aminomethyl-7-carbaguanine + 2 NADP(+) = 7-cyano-7-deazaguanine + 2 NADPH + 3 H(+). Its pathway is tRNA modification; tRNA-queuosine biosynthesis. Functionally, catalyzes the NADPH-dependent reduction of 7-cyano-7-deazaguanine (preQ0) to 7-aminomethyl-7-deazaguanine (preQ1). The chain is NADPH-dependent 7-cyano-7-deazaguanine reductase from Paraburkholderia xenovorans (strain LB400).